The sequence spans 271 residues: Phosphatidylglycerol--prolipoprotein diacylglyceryl transferase (271 aa).

7 helical membrane passes run 25–45 (WYGI…KFFV), 60–80 (YFIW…ILIY), 103–123 (FVGI…IATL), 134–154 (WIFL…GRIG), 181–201 (PSQL…VYLA), 209–229 (GELI…CEFY), and 235–255 (GIGF…IMFI). Arginine 152 is a binding site for a 1,2-diacyl-sn-glycero-3-phospho-(1'-sn-glycerol).

This sequence belongs to the Lgt family.

It localises to the cell inner membrane. The catalysed reaction is L-cysteinyl-[prolipoprotein] + a 1,2-diacyl-sn-glycero-3-phospho-(1'-sn-glycerol) = an S-1,2-diacyl-sn-glyceryl-L-cysteinyl-[prolipoprotein] + sn-glycerol 1-phosphate + H(+). Its pathway is protein modification; lipoprotein biosynthesis (diacylglyceryl transfer). Functionally, catalyzes the transfer of the diacylglyceryl group from phosphatidylglycerol to the sulfhydryl group of the N-terminal cysteine of a prolipoprotein, the first step in the formation of mature lipoproteins. In Campylobacter jejuni subsp. jejuni serotype O:23/36 (strain 81-176), this protein is Phosphatidylglycerol--prolipoprotein diacylglyceryl transferase.